Reading from the N-terminus, the 206-residue chain is Large ribosomal subunit protein mL62 (206 aa).

Residues 1–29 (MATAWCLPWTLRRAGAWLLTPPLRCPRRA) constitute a mitochondrion transit peptide.

This sequence belongs to the prokaryotic/mitochondrial release factor family. Mitochondrion-specific ribosomal protein mL62 subfamily. Component of the mitochondrial 39S ribosomal subunit.

The protein localises to the mitochondrion. It carries out the reaction an N-acyl-L-alpha-aminoacyl-tRNA + H2O = an N-acyl-L-amino acid + a tRNA + H(+). Essential peptidyl-tRNA hydrolase component of the mitochondrial large ribosomal subunit. Acts as a codon-independent translation release factor that has lost all stop codon specificity and directs the termination of translation in mitochondrion, possibly in case of abortive elongation. May be involved in the hydrolysis of peptidyl-tRNAs that have been prematurely terminated and thus in the recycling of stalled mitochondrial ribosomes. This chain is Large ribosomal subunit protein mL62, found in Ailuropoda melanoleuca (Giant panda).